We begin with the raw amino-acid sequence, 244 residues long: Gamma-gliadin (244 aa).

The segment at 18 to 64 is disordered; the sequence is QQPFLQQPQQPSPQPQQVVQIISPATPTTIPSAGKPTSAPFPQQQQQ. Positions 35–48 are enriched in polar residues; it reads VVQIISPATPTTIP.

Belongs to the gliadin/glutenin family.

Functionally, gliadin is the major seed storage protein in wheat. The protein is Gamma-gliadin of Triticum aestivum (Wheat).